We begin with the raw amino-acid sequence, 160 residues long: MITLYEAAIKTLITHRKQILKHPDSREILLALGLYWDKTHILLKCQECGKISLTGKHSTKCININCLLILAIKKKNKRIVDTLIGMGADVKYIHFLNNKTKLSYNQLSMLKSNPQISLKEFHAICYILYGRLPKKIKQGMRLCKTLAGLCGELLCAFFAP.

It belongs to the asfivirus MGF 300 family.

Functionally, plays a role in virus cell tropism, and may be required for efficient virus replication in macrophages. This African swine fever virus (isolate Tick/Malawi/Lil 20-1/1983) (ASFV) protein is Protein MGF 300-2R.